We begin with the raw amino-acid sequence, 616 residues long: Homeodomain-interacting protein kinase 4 (616 aa).

The Protein kinase domain maps to 11 to 347; that stretch reads YDIIEVLGKG…PSAALRHPFV (337 aa). Residues 17–25 and K40 each bind ATP; that span reads LGKGTFGEV. The active-site Proton acceptor is the D136. Positions 486–616 are disordered; the sequence is HKARKPPAGS…SFLQHVTGHH (131 aa). The segment covering 496–511 has biased composition (polar residues); sequence KSDSNFSNLIRLSQVS. Phosphoserine is present on S511.

The protein belongs to the protein kinase superfamily. CMGC Ser/Thr protein kinase family. HIPK subfamily. Autophosphorylated.

The protein resides in the cytoplasm. It carries out the reaction L-seryl-[protein] + ATP = O-phospho-L-seryl-[protein] + ADP + H(+). The enzyme catalyses L-threonyl-[protein] + ATP = O-phospho-L-threonyl-[protein] + ADP + H(+). Functionally, protein kinase that phosphorylates human TP53 at Ser-9, and thus induces TP53 repression of BIRC5 promoter. May act as a corepressor of transcription factors (Potential). This chain is Homeodomain-interacting protein kinase 4 (HIPK4), found in Homo sapiens (Human).